A 407-amino-acid polypeptide reads, in one-letter code: Tryptophan synthase beta chain (407 aa).

Lys91 carries the N6-(pyridoxal phosphate)lysine modification.

This sequence belongs to the TrpB family. In terms of assembly, tetramer of two alpha and two beta chains. Pyridoxal 5'-phosphate serves as cofactor.

It catalyses the reaction (1S,2R)-1-C-(indol-3-yl)glycerol 3-phosphate + L-serine = D-glyceraldehyde 3-phosphate + L-tryptophan + H2O. Its pathway is amino-acid biosynthesis; L-tryptophan biosynthesis; L-tryptophan from chorismate: step 5/5. Its function is as follows. The beta subunit is responsible for the synthesis of L-tryptophan from indole and L-serine. The sequence is that of Tryptophan synthase beta chain from Streptococcus pneumoniae (strain Taiwan19F-14).